The sequence spans 508 residues: GMP synthase [glutamine-hydrolyzing] (508 aa).

The Glutamine amidotransferase type-1 domain maps to 1-189 (MILVLDFGSQ…ALLVCDCEKT (189 aa)). The active-site Nucleophile is the C78. Catalysis depends on residues H163 and E165. Residues 190-383 (WGMQHFAQRE…LGISQDFLMR (194 aa)) enclose the GMPS ATP-PPase domain. 217 to 223 (SGGVDST) lines the ATP pocket.

In terms of assembly, homodimer.

It carries out the reaction XMP + L-glutamine + ATP + H2O = GMP + L-glutamate + AMP + diphosphate + 2 H(+). Its pathway is purine metabolism; GMP biosynthesis; GMP from XMP (L-Gln route): step 1/1. Functionally, catalyzes the synthesis of GMP from XMP. In Helicobacter pylori (strain HPAG1), this protein is GMP synthase [glutamine-hydrolyzing].